The sequence spans 608 residues: Dolichyl-diphosphooligosaccharide--protein glycosyltransferase subunit 1 (608 aa).

The first 24 residues, 1 to 24 (MEAPAVCLLPLLLLLWAWAPAPGR), serve as a signal peptide directing secretion. Over 25–435 (ASPEALPLVN…VVHYTFNKVL (411 aa)) the chain is Lumenal. K188 carries the N6-acetyllysine modification. Residue N300 is glycosylated (N-linked (GlcNAc...) asparagine). Residues 436-456 (MLQEPLLVVAAFYILFFTVIV) form a helical membrane-spanning segment. Topologically, residues 457 to 607 (YVRLDFSITK…VTKIDHILDA (151 aa)) are cytoplasmic. K539 carries the N6-acetyllysine; alternate modification. K539 is covalently cross-linked (Glycyl lysine isopeptide (Lys-Gly) (interchain with G-Cter in SUMO2); alternate).

Belongs to the OST1 family. Component of the oligosaccharyltransferase (OST) complex. OST exists in two different complex forms which contain common core subunits RPN1, RPN2, OST48, OST4, DAD1 and TMEM258, either STT3A or STT3B as catalytic subunits, and form-specific accessory subunits. STT3A complex assembly occurs through the formation of 3 subcomplexes. Subcomplex 1 contains RPN1 and TMEM258, subcomplex 2 contains the STT3A-specific subunits STT3A, DC2/OSTC, and KCP2 as well as the core subunit OST4, and subcomplex 3 contains RPN2, DAD1, and OST48. The STT3A complex can form stable complexes with the Sec61 complex or with both the Sec61 and TRAP complexes. Interacts with TMEM35A/NACHO. Post-translationally, ubiquitinated by the ECS(ASB11) complex. In terms of processing, ufmylated by UFL1 in response to endoplasmic reticulum stress, promoting reticulophagy of endoplasmic reticulum sheets. Detected in liver (at protein level).

It localises to the endoplasmic reticulum membrane. Its pathway is protein modification; protein glycosylation. Its function is as follows. Subunit of the oligosaccharyl transferase (OST) complex that catalyzes the initial transfer of a defined glycan (Glc(3)Man(9)GlcNAc(2) in eukaryotes) from the lipid carrier dolichol-pyrophosphate to an asparagine residue within an Asn-X-Ser/Thr consensus motif in nascent polypeptide chains, the first step in protein N-glycosylation. N-glycosylation occurs cotranslationally and the complex associates with the Sec61 complex at the channel-forming translocon complex that mediates protein translocation across the endoplasmic reticulum (ER). All subunits are required for a maximal enzyme activity. The protein is Dolichyl-diphosphooligosaccharide--protein glycosyltransferase subunit 1 of Sus scrofa (Pig).